The chain runs to 414 residues: Tyrosine--tRNA ligase (414 aa).

Residue tyrosine 38 coordinates L-tyrosine. Residues 43–52 carry the 'HIGH' region motif; sequence PTATSLHLGN. 2 residues coordinate L-tyrosine: tyrosine 165 and glutamine 169. Residues 228-232 carry the 'KMSKS' region motif; that stretch reads KFGKS. Lysine 231 serves as a coordination point for ATP. One can recognise an S4 RNA-binding domain in the interval 349–414; it reads FNANQIIDLG…KKYFFIIELI (66 aa).

Belongs to the class-I aminoacyl-tRNA synthetase family. TyrS type 1 subfamily. Homodimer.

It is found in the cytoplasm. It catalyses the reaction tRNA(Tyr) + L-tyrosine + ATP = L-tyrosyl-tRNA(Tyr) + AMP + diphosphate + H(+). Its function is as follows. Catalyzes the attachment of tyrosine to tRNA(Tyr) in a two-step reaction: tyrosine is first activated by ATP to form Tyr-AMP and then transferred to the acceptor end of tRNA(Tyr). The sequence is that of Tyrosine--tRNA ligase from Mesomycoplasma hyopneumoniae (strain 232) (Mycoplasma hyopneumoniae).